Consider the following 440-residue polypeptide: MSKNVVVIGTQWGDEGKGKIVDWLTDHAQGVVRFQGGHNAGHTLVIGQGASQKEYKLNLVPSGIVREGVNCYIGNGVVLDANHLLFEIDGLEKAGLEVRNRLKVSPGCPLILEYHVRLDKAREAAREPGRKIGTTGKGIGPTYEDKVARRALRVYDLFYPERFAEKLREVLDYHNFVLTKYLNAEAVDYQQQLDEALSKAPLLQPLVTDISAALYEANKAGQNLLFEGAQGTLLDVDHGTYPYVTSSNCISGQAAAGTGVGPSMLHYVLGITKAYTTRVGGGPFPSELDIETEDSPGFQMSDKGREIGTVTKRKRRCGWFDAAALRRSARINGLTGLCITKLDVLDGIKELNICTGYELDGKPVDLLPVGADDVARCQPVYETLPGWDESTFGISRWEDLPQNARNYLKRLEALCEVPVDIVSTGPERDETIVLRHPFGA.

GTP contacts are provided by residues 13-19 and 41-43; these read GDEGKGK and GHT. The Proton acceptor role is filled by Asp14. Mg(2+)-binding residues include Asp14 and Gly41. IMP is bound by residues 14–17, 39–42, Thr135, Arg149, Gln230, Thr245, and Arg313; these read DEGK and NAGH. The Proton donor role is filled by His42. Residue 309 to 315 coordinates substrate; it reads TVTKRKR. Residues Arg315, 341–343, and 423–425 each bind GTP; these read KLD and STG.

Belongs to the adenylosuccinate synthetase family. As to quaternary structure, homodimer. Requires Mg(2+) as cofactor.

The protein localises to the cytoplasm. It catalyses the reaction IMP + L-aspartate + GTP = N(6)-(1,2-dicarboxyethyl)-AMP + GDP + phosphate + 2 H(+). It functions in the pathway purine metabolism; AMP biosynthesis via de novo pathway; AMP from IMP: step 1/2. Its function is as follows. Plays an important role in the de novo pathway of purine nucleotide biosynthesis. Catalyzes the first committed step in the biosynthesis of AMP from IMP. The polypeptide is Adenylosuccinate synthetase (Methylobacillus flagellatus (strain ATCC 51484 / DSM 6875 / VKM B-1610 / KT)).